Reading from the N-terminus, the 236-residue chain is Peptidase E (236 aa).

Catalysis depends on charge relay system residues Ser122, Asp137, and His159.

It belongs to the peptidase S51 family.

The protein resides in the cytoplasm. The enzyme catalyses Dipeptidase E catalyzes the hydrolysis of dipeptides Asp-|-Xaa. It does not act on peptides with N-terminal Glu, Asn or Gln, nor does it cleave isoaspartyl peptides.. Its function is as follows. Hydrolyzes dipeptides containing N-terminal aspartate residues. May play a role in allowing the cell to use peptide aspartate to spare carbon otherwise required for the synthesis of the aspartate family of amino acids. The protein is Peptidase E of Shewanella putrefaciens (strain CN-32 / ATCC BAA-453).